We begin with the raw amino-acid sequence, 327 residues long: Glycerol-3-phosphate dehydrogenase [NAD(P)+] (327 aa).

NADPH-binding residues include Phe14, Arg35, and Lys108. Residues Lys108 and Gly136 each contribute to the sn-glycerol 3-phosphate site. NADPH is bound at residue Ala140. Positions 191, 244, 254, 255, and 256 each coordinate sn-glycerol 3-phosphate. Lys191 (proton acceptor) is an active-site residue. Residue Arg255 participates in NADPH binding. NADPH contacts are provided by Leu275 and Glu277.

It belongs to the NAD-dependent glycerol-3-phosphate dehydrogenase family.

Its subcellular location is the cytoplasm. It catalyses the reaction sn-glycerol 3-phosphate + NAD(+) = dihydroxyacetone phosphate + NADH + H(+). The enzyme catalyses sn-glycerol 3-phosphate + NADP(+) = dihydroxyacetone phosphate + NADPH + H(+). It functions in the pathway membrane lipid metabolism; glycerophospholipid metabolism. Its function is as follows. Catalyzes the reduction of the glycolytic intermediate dihydroxyacetone phosphate (DHAP) to sn-glycerol 3-phosphate (G3P), the key precursor for phospholipid synthesis. This chain is Glycerol-3-phosphate dehydrogenase [NAD(P)+], found in Agrobacterium fabrum (strain C58 / ATCC 33970) (Agrobacterium tumefaciens (strain C58)).